Reading from the N-terminus, the 335-residue chain is Mycobacterial beta-ketoacyl-[acyl-carrier-protein] synthase III (335 aa).

Catalysis depends on residues Cys122 and His258. The segment at 259 to 263 is ACP-binding; sequence QANSR. Asn289 is an active-site residue.

Belongs to the thiolase-like superfamily. FabH family. In terms of assembly, homodimer.

The protein resides in the cytoplasm. The enzyme catalyses malonyl-[ACP] + dodecanoyl-CoA + H(+) = 3-oxotetradecanoyl-[ACP] + CO2 + CoA. It functions in the pathway lipid metabolism; fatty acid biosynthesis. The protein operates within lipid metabolism; mycolic acid biosynthesis. In terms of biological role, catalyzes the condensation reaction of fatty acid synthesis by the addition to an acyl acceptor of two carbons from malonyl-ACP. Catalyzes the first condensation reaction which initiates fatty acid synthesis and may therefore play a role in governing the total rate of fatty acid production. Possesses both acetoacetyl-ACP synthase and acetyl transacylase activities. Its substrate specificity determines the biosynthesis of branched-chain and/or straight-chain of fatty acids. The chain is Mycobacterial beta-ketoacyl-[acyl-carrier-protein] synthase III from Mycobacterium bovis (strain ATCC BAA-935 / AF2122/97).